The following is a 299-amino-acid chain: MHVLAARLGEILHSPVQLGEPLSRHTSWRIGGPAEIFLSPCDTKELVASLELLAQVGMPWIALGAGTNVLVRDGGFRGAVIHTGGLQDMAFDADGRARVGGGVPVMRLIRHCVERGLAGLEDLAGLPATIGGAVVMNAGAGKQDLAGVLDGAFLAGPSGVEYWPADRLELGYRTSAVPPGRIVTAASLRFRKASPEVLETYVRQRVQQRRKAQGVGKPNAGSVFKNPPGQQAWRLIDSCELRGFAVGGAQVSEKHANFIVNRGGARAEDVLRLIAEIQKKVEKRTGIVLEPEVKVVGQA.

In terms of domain architecture, FAD-binding PCMH-type spans 29–193; it reads RIGGPAEIFL…TAASLRFRKA (165 aa). Residue R173 is part of the active site. S222 acts as the Proton donor in catalysis. The active site involves E292.

It belongs to the MurB family. The cofactor is FAD.

The protein localises to the cytoplasm. The catalysed reaction is UDP-N-acetyl-alpha-D-muramate + NADP(+) = UDP-N-acetyl-3-O-(1-carboxyvinyl)-alpha-D-glucosamine + NADPH + H(+). It functions in the pathway cell wall biogenesis; peptidoglycan biosynthesis. Functionally, cell wall formation. The chain is UDP-N-acetylenolpyruvoylglucosamine reductase from Syntrophotalea carbinolica (strain DSM 2380 / NBRC 103641 / GraBd1) (Pelobacter carbinolicus).